The chain runs to 650 residues: ATP-dependent zinc metalloprotease FtsH (650 aa).

Residues 1-10 are Cytoplasmic-facing; the sequence is MKTKKSKSTL. The helical transmembrane segment at 11–31 threads the bilayer; it reads WFWLIILLAIIVTIIIIAVTV. Residues 32-123 are Extracellular-facing; the sequence is KGTTQVISDA…LVYQGSVGMA (92 aa). A helical membrane pass occupies residues 124 to 144; that stretch reads LLVSLAPLLIYVLLFGGIIWF. Topologically, residues 145-650 are cytoplasmic; it reads MMKSSSGAGA…DIKVEDLDID (506 aa). 217-224 is an ATP binding site; it reads GPPGTGKT. Histidine 437 is a binding site for Zn(2+). Glutamate 438 is an active-site residue. Zn(2+)-binding residues include histidine 441 and aspartate 515.

In the central section; belongs to the AAA ATPase family. This sequence in the C-terminal section; belongs to the peptidase M41 family. Homohexamer. Zn(2+) is required as a cofactor.

It is found in the cell membrane. Functionally, acts as a processive, ATP-dependent zinc metallopeptidase for both cytoplasmic and membrane proteins. Plays a role in the quality control of integral membrane proteins. This is ATP-dependent zinc metalloprotease FtsH from Mesoplasma florum (strain ATCC 33453 / NBRC 100688 / NCTC 11704 / L1) (Acholeplasma florum).